The following is a 413-amino-acid chain: MTMEPRVLRREEWDSWYGSLIRAFGGVPEPAEELELFRELTRVDRSIGVWERDGEAEACVGTTGSFDFRMTVPGGAQVRAAGVTMVSVAATHRRRGVLTSMMRRQLDDVRAWGEPLAVLTASEPAIYGRFGYGAATFSLSAEIDTSRVRLSVPAGTDDVRLRYAAPADVLDACEAVYARLVPGRPGMLARRPGWERLALLDPESGRDGASPLQCVVARRGGEVTGFARFRVRPAWGPEGAGGTVVLDDLAGLDPATEAALWRFLYDVDLTSRLAVRGRPVDEAWQYQVSDIRRCRPESRDALYVRLVDVGAALAARTYQAPVDVVFEVEDAFCPWNAGRWRLSGDAKGASCERTSDGADLALSVRELGAAYLGGVRLSSLGAAGRVREVRAGALAEASVGFGSDVAPWLPHGF.

Positions 3–155 (MEPRVLRREE…SRVRLSVPAG (153 aa)) constitute an N-acetyltransferase domain. Residues 86–88 (VSV), 94–99 (RRGVLT), and 122–123 (SE) contribute to the acetyl-CoA site. Tyr127 (proton donor) is an active-site residue. Catalysis depends on Phe413, which acts as the Proton acceptor; via carboxylate.

Belongs to the acetyltransferase Eis family. As to quaternary structure, homohexamer; trimer of dimers.

This is an uncharacterized protein from Streptomyces coelicolor (strain ATCC BAA-471 / A3(2) / M145).